Reading from the N-terminus, the 193-residue chain is Xanthine phosphoribosyltransferase (193 aa).

Residues leucine 20 and threonine 27 each contribute to the xanthine site. Position 128–132 (128–132) interacts with 5-phospho-alpha-D-ribose 1-diphosphate; the sequence is ANGQA. Lysine 156 provides a ligand contact to xanthine.

It belongs to the purine/pyrimidine phosphoribosyltransferase family. Xpt subfamily. In terms of assembly, homodimer.

It localises to the cytoplasm. The catalysed reaction is XMP + diphosphate = xanthine + 5-phospho-alpha-D-ribose 1-diphosphate. Its pathway is purine metabolism; XMP biosynthesis via salvage pathway; XMP from xanthine: step 1/1. Its function is as follows. Converts the preformed base xanthine, a product of nucleic acid breakdown, to xanthosine 5'-monophosphate (XMP), so it can be reused for RNA or DNA synthesis. This is Xanthine phosphoribosyltransferase from Streptococcus pneumoniae serotype 4 (strain ATCC BAA-334 / TIGR4).